Consider the following 104-residue polypeptide: MVSTTLSVSRMTFVWRAARPSLLNHSLRKMSYQEGKPEPAKQALKKSKLPLGRFDSLEDSPEEREPLQKFPDDVNPVTKEKGGPKGPEPTRYGDWERKGRCIDF.

The transit peptide at 1–30 (MVSTTLSVSRMTFVWRAARPSLLNHSLRKM) directs the protein to the mitochondrion. Residues 29–104 (KMSYQEGKPE…WERKGRCIDF (76 aa)) form a disordered region. Basic and acidic residues-rich tracts occupy residues 63–83 (EREP…EKGG) and 91–104 (RYGD…CIDF).

Belongs to the SDHAF4 family. As to quaternary structure, interacts with Sdha in its FAD-bound form.

It is found in the mitochondrion matrix. Plays an essential role in the assembly of succinate dehydrogenase (SDH), an enzyme complex (also referred to as respiratory complex II) that is a component of both the tricarboxylic acid (TCA) cycle and the mitochondrial electron transport chain, and which couples the oxidation of succinate to fumarate with the reduction of ubiquinone (coenzyme Q) to ubiquinol. Binds to the flavoprotein subunit Sdha in its FAD-bound form, blocking the generation of excess reactive oxygen species (ROS) and facilitating its assembly with the iron-sulfur protein subunit Sdhb into the SDH catalytic dimer. This Mus musculus (Mouse) protein is Succinate dehydrogenase assembly factor 4, mitochondrial.